The chain runs to 974 residues: Exocyst complex component 4 (974 aa).

Alanine 2 carries the N-acetylalanine modification. Lysine 9 is subject to N6-acetyllysine. Residues serine 32 and serine 226 each carry the phosphoserine modification. The stretch at 32 to 114 (STSDDVEDRE…HCKRDELRKL (83 aa)) forms a coiled coil. Threonine 233 and threonine 237 each carry phosphothreonine. A Phosphoserine modification is found at serine 468.

Belongs to the SEC8 family. The exocyst complex is composed of EXOC1, EXOC2, EXOC3, EXOC4, EXOC5, EXOC6, EXOC7 and EXOC8. Interacts with BIRC6/bruce. Interacts with MYRIP. Interacts with SH3BP1; required for the localization of both SH3BP1 and the exocyst to the leading edge of migrating cells. Interacts with SLC6A9.

Its subcellular location is the midbody. It is found in the midbody ring. It localises to the cell projection. The protein resides in the cytoplasm. The protein localises to the cytoskeleton. Its subcellular location is the microtubule organizing center. It is found in the centrosome. Component of the exocyst complex involved in the docking of exocytic vesicles with fusion sites on the plasma membrane. The protein is Exocyst complex component 4 (EXOC4) of Homo sapiens (Human).